The primary structure comprises 201 residues: FMN reductase (NADH) RutF 1 (201 aa).

Low complexity predominate over residues 167–195; that stretch reads PRAPRSGSAPAEPARAARAVGARPAEGPA. The interval 167–201 is disordered; that stretch reads PRAPRSGSAPAEPARAARAVGARPAEGPALALRSA.

Belongs to the non-flavoprotein flavin reductase family. RutF subfamily.

The enzyme catalyses FMNH2 + NAD(+) = FMN + NADH + 2 H(+). In terms of biological role, catalyzes the reduction of FMN to FMNH2 which is used to reduce pyrimidine by RutA via the Rut pathway. The protein is FMN reductase (NADH) RutF 1 of Methylorubrum extorquens (strain CM4 / NCIMB 13688) (Methylobacterium extorquens).